The following is a 210-amino-acid chain: Glutathione S-transferase P (210 aa).

The GST N-terminal domain maps to 2–81; that stretch reads PPYTVVYFPV…HLGRTLGLYG (80 aa). Position 4 is a phosphotyrosine; by EGFR (Tyr-4). Glutathione-binding positions include Tyr-8, Arg-14, Trp-39, Lys-45, and 52–53; that span reads QL. Residue Thr-62 is modified to Phosphothreonine. 65 to 66 is a glutathione binding site; it reads QS. Residues 83–204 form the GST C-terminal domain; it reads DQREAALVDM…ASPEHVNLPI (122 aa). N6-succinyllysine is present on residues Lys-103 and Lys-116. At Lys-128 the chain carries N6-acetyllysine.

It belongs to the GST superfamily. Pi family. As to quaternary structure, homodimer. Interacts with CDK5.

It is found in the cytoplasm. Its subcellular location is the mitochondrion. The protein resides in the nucleus. The enzyme catalyses RX + glutathione = an S-substituted glutathione + a halide anion + H(+). It carries out the reaction prostaglandin J2 + glutathione = prostaglandin J2-S-(R)-glutathione. It catalyses the reaction prostaglandin J2 + glutathione = prostaglandin J2-S-(S)-glutathione. The catalysed reaction is prostaglandin A2 + glutathione = prostaglandin A2-S-(S)-glutathione. The enzyme catalyses 11(S)-hydroxy-14(S),15(S)-epoxy-(5Z,8Z,12E)-eicosatrienoate + glutathione = (11S,15S)-dihydroxy-14(R)-S-glutathionyl-(5Z,8Z,12E)-eicosatrienoate. Its function is as follows. Conjugation of reduced glutathione to a wide number of exogenous and endogenous hydrophobic electrophiles. Involved in the formation of glutathione conjugates of both prostaglandin A2 (PGA2) and prostaglandin J2 (PGJ2). Participates in the formation of novel hepoxilin regioisomers. Negatively regulates CDK5 activity via p25/p35 translocation to prevent neurodegeneration. The sequence is that of Glutathione S-transferase P (GSTP1) from Pongo abelii (Sumatran orangutan).